A 1009-amino-acid chain; its full sequence is Protein translocase subunit SecA (1009 aa).

Residues glutamine 86, glycine 104–threonine 108, and aspartate 497 contribute to the ATP site. 2 disordered regions span residues alanine 869 to proline 894 and glutamate 949 to glycine 1009. Low complexity-rich tracts occupy residues proline 883–proline 894 and serine 953–glycine 973. The Zn(2+) site is built by cysteine 990, cysteine 992, cysteine 1001, and histidine 1002.

This sequence belongs to the SecA family. As to quaternary structure, monomer and homodimer. Part of the essential Sec protein translocation apparatus which comprises SecA, SecYEG and auxiliary proteins SecDF. Other proteins may also be involved. Zn(2+) serves as cofactor.

It is found in the cell membrane. The protein resides in the cytoplasm. It catalyses the reaction ATP + H2O + cellular proteinSide 1 = ADP + phosphate + cellular proteinSide 2.. Its function is as follows. Part of the Sec protein translocase complex. Interacts with the SecYEG preprotein conducting channel. Has a central role in coupling the hydrolysis of ATP to the transfer of proteins into and across the cell membrane, serving as an ATP-driven molecular motor driving the stepwise translocation of polypeptide chains across the membrane. This is Protein translocase subunit SecA from Acidothermus cellulolyticus (strain ATCC 43068 / DSM 8971 / 11B).